The primary structure comprises 397 residues: Elongation factor Tu (397 aa).

A tr-type G domain is found at 10 to 207; that stretch reads KPHVNVGTIG…ACDSYIPDPQ (198 aa). A G1 region spans residues 19-26; that stretch reads GHIDHGKT. A GTP-binding site is contributed by 19-26; the sequence is GHIDHGKT. Thr26 provides a ligand contact to Mg(2+). Residues 60-64 form a G2 region; sequence GITIA. Residues 81–84 are G3; the sequence is DCPG. GTP contacts are provided by residues 81-85 and 136-139; these read DCPGH and NKCD. The interval 136-139 is G4; the sequence is NKCD. Positions 174-176 are G5; sequence SAL.

It belongs to the TRAFAC class translation factor GTPase superfamily. Classic translation factor GTPase family. EF-Tu/EF-1A subfamily. Monomer.

It localises to the cytoplasm. It catalyses the reaction GTP + H2O = GDP + phosphate + H(+). GTP hydrolase that promotes the GTP-dependent binding of aminoacyl-tRNA to the A-site of ribosomes during protein biosynthesis. This chain is Elongation factor Tu, found in Lawsonia intracellularis (strain PHE/MN1-00).